The sequence spans 152 residues: Large ribosomal subunit protein uL15 (152 aa).

A disordered region spans residues 1–66 (MRSNPMTLRL…GFEGGQTPMQ (66 aa)). The segment covering 28–38 (RGIGSGLGKTA) has biased composition (gly residues). The span at 39-52 (GRGHKGSFARKGGG) shows a compositional bias: basic residues.

Belongs to the universal ribosomal protein uL15 family. As to quaternary structure, part of the 50S ribosomal subunit.

Binds to the 23S rRNA. The polypeptide is Large ribosomal subunit protein uL15 (Xanthomonas oryzae pv. oryzae (strain KACC10331 / KXO85)).